The following is a 218-amino-acid chain: Probable transaldolase (218 aa).

Catalysis depends on Lys-83, which acts as the Schiff-base intermediate with substrate.

Belongs to the transaldolase family. Type 3B subfamily.

The protein localises to the cytoplasm. The enzyme catalyses D-sedoheptulose 7-phosphate + D-glyceraldehyde 3-phosphate = D-erythrose 4-phosphate + beta-D-fructose 6-phosphate. It participates in carbohydrate degradation; pentose phosphate pathway; D-glyceraldehyde 3-phosphate and beta-D-fructose 6-phosphate from D-ribose 5-phosphate and D-xylulose 5-phosphate (non-oxidative stage): step 2/3. Its function is as follows. Transaldolase is important for the balance of metabolites in the pentose-phosphate pathway. The sequence is that of Probable transaldolase from Kosmotoga olearia (strain ATCC BAA-1733 / DSM 21960 / TBF 19.5.1).